A 101-amino-acid polypeptide reads, in one-letter code: Small ribosomal subunit protein eS24 (101 aa).

It belongs to the eukaryotic ribosomal protein eS24 family.

The sequence is that of Small ribosomal subunit protein eS24 from Methanosarcina acetivorans (strain ATCC 35395 / DSM 2834 / JCM 12185 / C2A).